A 209-amino-acid polypeptide reads, in one-letter code: FMN-dependent NADH:quinone oxidoreductase 2 (209 aa).

FMN is bound by residues S9, 15-17 (SVS), and 97-100 (MWNF).

Belongs to the azoreductase type 1 family. In terms of assembly, homodimer. Requires FMN as cofactor.

It carries out the reaction 2 a quinone + NADH + H(+) = 2 a 1,4-benzosemiquinone + NAD(+). It catalyses the reaction N,N-dimethyl-1,4-phenylenediamine + anthranilate + 2 NAD(+) = 2-(4-dimethylaminophenyl)diazenylbenzoate + 2 NADH + 2 H(+). In terms of biological role, quinone reductase that provides resistance to thiol-specific stress caused by electrophilic quinones. Also exhibits azoreductase activity. Catalyzes the reductive cleavage of the azo bond in aromatic azo compounds to the corresponding amines. This Pseudomonas syringae pv. tomato (strain ATCC BAA-871 / DC3000) protein is FMN-dependent NADH:quinone oxidoreductase 2.